The primary structure comprises 315 residues: Probable cytosolic iron-sulfur protein assembly protein CIAO1 homolog (315 aa).

WD repeat units follow at residues 11-50 (GHEDRVWNVAWNPSGTILASCGGDKSIRLWGLEGGSWVCK), 56-95 (GHQRTVRGVSWSNCGRYLASSSFDGTTCIWRRQDDTFESC), 100-139 (GHENEVKACGWSPSGRFLATCSRDKTVWIWEVGEDEEFEC), 145-188 (CHSQ…CTLD), 189-229 (KHAS…RSWE), 236-275 (RHPRPVYDVSWCRTRGFLATACGDNAVRVFVKDGGDCSWR), and 283-315 (AHSQDVNSVSWSPSGGLLASAGDDGYVRLWQID).

Belongs to the WD repeat CIA1 family.

Essential component of the cytosolic iron-sulfur (Fe/S) protein assembly machinery. Required for the maturation of extramitochondrial Fe/S proteins. This chain is Probable cytosolic iron-sulfur protein assembly protein CIAO1 homolog, found in Ixodes scapularis (Black-legged tick).